The sequence spans 405 residues: Tryptophan synthase beta chain (405 aa).

At Lys-98 the chain carries N6-(pyridoxal phosphate)lysine.

The protein belongs to the TrpB family. In terms of assembly, tetramer of two alpha and two beta chains. Pyridoxal 5'-phosphate serves as cofactor.

It carries out the reaction (1S,2R)-1-C-(indol-3-yl)glycerol 3-phosphate + L-serine = D-glyceraldehyde 3-phosphate + L-tryptophan + H2O. Its pathway is amino-acid biosynthesis; L-tryptophan biosynthesis; L-tryptophan from chorismate: step 5/5. Functionally, the beta subunit is responsible for the synthesis of L-tryptophan from indole and L-serine. In Xanthomonas oryzae pv. oryzae (strain MAFF 311018), this protein is Tryptophan synthase beta chain.